We begin with the raw amino-acid sequence, 28 residues long: RICPRIWMECKRDSDCMAQCICVDGHCG.

3 disulfides stabilise this stretch: Cys-3-Cys-20, Cys-10-Cys-22, and Cys-16-Cys-27.

This sequence belongs to the protease inhibitor I7 (squash-type serine protease inhibitor) family.

It localises to the secreted. Functionally, inhibits trypsin. In Momordica charantia (Bitter gourd), this protein is Trypsin inhibitor 2.